Here is a 1163-residue protein sequence, read N- to C-terminus: Carbamoyl phosphate synthase large chain (1163 aa).

The carboxyphosphate synthetic domain stretch occupies residues 1 to 456 (MPKRQDIKSI…SLQKALRGLE (456 aa)). Arg129 contributes to the ATP binding site. The interval 148–170 (LANATDIKDHDRKSHEAERSALK) is disordered. Positions 153–170 (DIKDHDRKSHEAERSALK) are enriched in basic and acidic residues. The 197-residue stretch at 185–381 (LENQWNLGEG…IAKIAAKLAV (197 aa)) folds into the ATP-grasp 1 domain. 11 residues coordinate ATP: Arg222, Gly228, Gly229, Glu261, Val263, Glu268, Gly294, Val295, His296, Gln338, and Glu352. Residues Gln338, Glu352, and Asn354 each coordinate Mg(2+). Mn(2+) is bound by residues Gln338, Glu352, and Asn354. The oligomerization domain stretch occupies residues 457–614 (TGLTGLDEIE…PFVGAARSEA (158 aa)). The carbamoyl phosphate synthetic domain stretch occupies residues 615–1026 (QVSDRKKVVI…AFAKSQLGAG (412 aa)). In terms of domain architecture, ATP-grasp 2 spans 743 to 955 (QKLLMKLDLN…IAKIAARVMA (213 aa)). ATP is bound by residues Arg779, Ser839, Leu841, Glu846, Gly871, Ile872, His873, Ser874, Gln914, and Glu926. 3 residues coordinate Mg(2+): Gln914, Glu926, and Asn928. Gln914, Glu926, and Asn928 together coordinate Mn(2+). One can recognise an MGS-like domain in the interval 1027-1163 (VDLPRDGTVF…VRPLQSYFET (137 aa)). Residues 1027 to 1163 (VDLPRDGTVF…VRPLQSYFET (137 aa)) are allosteric domain.

It belongs to the CarB family. As to quaternary structure, composed of two chains; the small (or glutamine) chain promotes the hydrolysis of glutamine to ammonia, which is used by the large (or ammonia) chain to synthesize carbamoyl phosphate. Tetramer of heterodimers (alpha,beta)4. Requires Mg(2+) as cofactor. Mn(2+) serves as cofactor.

It catalyses the reaction hydrogencarbonate + L-glutamine + 2 ATP + H2O = carbamoyl phosphate + L-glutamate + 2 ADP + phosphate + 2 H(+). The catalysed reaction is hydrogencarbonate + NH4(+) + 2 ATP = carbamoyl phosphate + 2 ADP + phosphate + 2 H(+). It functions in the pathway amino-acid biosynthesis; L-arginine biosynthesis; carbamoyl phosphate from bicarbonate: step 1/1. The protein operates within pyrimidine metabolism; UMP biosynthesis via de novo pathway; (S)-dihydroorotate from bicarbonate: step 1/3. In terms of biological role, large subunit of the glutamine-dependent carbamoyl phosphate synthetase (CPSase). CPSase catalyzes the formation of carbamoyl phosphate from the ammonia moiety of glutamine, carbonate, and phosphate donated by ATP, constituting the first step of 2 biosynthetic pathways, one leading to arginine and/or urea and the other to pyrimidine nucleotides. The large subunit (synthetase) binds the substrates ammonia (free or transferred from glutamine from the small subunit), hydrogencarbonate and ATP and carries out an ATP-coupled ligase reaction, activating hydrogencarbonate by forming carboxy phosphate which reacts with ammonia to form carbamoyl phosphate. This chain is Carbamoyl phosphate synthase large chain, found in Rhizobium meliloti (strain 1021) (Ensifer meliloti).